We begin with the raw amino-acid sequence, 89 residues long: Acylphosphatase (89 aa).

Residues 3-89 (HIHLQVFGRV…NQKLSDFRSI (87 aa)) form the Acylphosphatase-like domain. Active-site residues include arginine 18 and asparagine 36.

Belongs to the acylphosphatase family.

It catalyses the reaction an acyl phosphate + H2O = a carboxylate + phosphate + H(+). In Staphylococcus aureus (strain Mu3 / ATCC 700698), this protein is Acylphosphatase (acyP).